A 562-amino-acid chain; its full sequence is NAD-dependent histone deacetylase SIR2 (562 aa).

The segment at 1–67 (MTIPHMKYAV…RETNTTDPLG (67 aa)) is disordered. Over residues 11 to 25 (SKTSENKVSNTVSPT) the composition is skewed to polar residues. Over residues 26–36 (QDKDAIRKQPD) the composition is skewed to basic and acidic residues. Residues 237–527 (RLSNFFTIDH…AMVAQKCGWT (291 aa)) form the Deacetylase sirtuin-type domain. Residues 262–281 (GAGV…EGFY) and 344–347 (QNID) contribute to the NAD(+) site. His-364 acts as the Proton acceptor in catalysis. Cys-372, Cys-375, Cys-396, and Cys-399 together coordinate Zn(2+). Residues 471–473 (GTS), 496–498 (NRD), and Cys-513 each bind NAD(+).

It belongs to the sirtuin family. Class I subfamily. In terms of assembly, homomultimer. Forms a complex with SIR3 and SIR4. Component of the RENT complex, at least composed of SIR2, CDC14 and NET1. The RENT complex interacts with FOB1. Interacts with ESC8. Interacts with and ZDS2. Interacts with MCM10. Interacts with SLX5. Interacts with NSI1. Zn(2+) serves as cofactor.

The protein resides in the nucleus. It is found in the nucleolus. It catalyses the reaction N(6)-acetyl-L-lysyl-[protein] + NAD(+) + H2O = 2''-O-acetyl-ADP-D-ribose + nicotinamide + L-lysyl-[protein]. Its activity is increased by calorie restriction, which slows the pace of aging and increases maximum lifespan. Activated by resveratrol (3,5,4'-trihydroxy-trans-stilbene), which is found in red wine. NAD-dependent deacetylase, which participates in a wide range of cellular events including chromosome silencing, chromosome segregation, DNA recombination and the determination of life span. Involved in transcriptional repression of the silent mating-type loci HML and HMR and telomeric silencing via its association with SIR3 and SIR4. Plays a central role in ribosomal DNA (rDNA) silencing via its association with the RENT complex, preventing hyperrecombination, and repressing transcription from foreign promoters, which contributes to extending life span. Probably represses transcription via the formation of heterochromatin structure, which involves the compaction of chromatin fiber into a more condensed form, although this complex in at least one case can still bind euchromatic levels of positive transcription regulators. Although it displays some NAD-dependent histone deacetylase activity on histone H3K9Ac and H3K14Ac and histone H4K16Ac in vitro, such activity is unclear in vivo and may not be essential. The sequence is that of NAD-dependent histone deacetylase SIR2 (SIR2) from Saccharomyces cerevisiae (strain ATCC 204508 / S288c) (Baker's yeast).